Consider the following 147-residue polypeptide: E3 ubiquitin-protein ligase RNF181 homolog (147 aa).

Residues 70 to 111 form an RING-type; atypical zinc finger; the sequence is CSVCKEPAEEGQKYRILPCKHEFHEECILLWLKKTNSCPLCR.

The protein belongs to the RNF181 family.

It catalyses the reaction S-ubiquitinyl-[E2 ubiquitin-conjugating enzyme]-L-cysteine + [acceptor protein]-L-lysine = [E2 ubiquitin-conjugating enzyme]-L-cysteine + N(6)-ubiquitinyl-[acceptor protein]-L-lysine.. The protein operates within protein modification; protein ubiquitination. Its function is as follows. E3 ubiquitin-protein ligase which accepts ubiquitin from an E2 ubiquitin-conjugating enzyme in the form of a thioester and then directly transfers the ubiquitin to targeted substrates. The chain is E3 ubiquitin-protein ligase RNF181 homolog from Drosophila melanogaster (Fruit fly).